The sequence spans 176 residues: Interleukin-1 receptor antagonist protein (176 aa).

The signal sequence occupies residues 1–25; the sequence is METCRCPLSYLISFLLFLSHSETAC. A disulfide bridge links cysteine 91 with cysteine 141. An N-linked (GlcNAc...) asparagine glycan is attached at asparagine 109.

The protein belongs to the IL-1 family.

It is found in the secreted. Functionally, anti-inflammatory antagonist of interleukin-1 family of proinflammatory cytokines such as interleukin-1beta/IL1B and interleukin-1alpha/IL1A. Protects from immune dysregulation and uncontrolled systemic inflammation triggered by IL1 for a range of innate stimulatory agents such as pathogens. This Canis lupus familiaris (Dog) protein is Interleukin-1 receptor antagonist protein (IL1RN).